We begin with the raw amino-acid sequence, 163 residues long: Transcriptional repressor NrdR (163 aa).

Residues 3–34 (CPKCNYLKSSVVDSRQAEEGNTIRRRRECENC) fold into a zinc finger. An ATP-cone domain is found at 49-139 (LLVVKKDGTR…VYRSFKDVDE (91 aa)).

It belongs to the NrdR family. Requires Zn(2+) as cofactor.

In terms of biological role, negatively regulates transcription of bacterial ribonucleotide reductase nrd genes and operons by binding to NrdR-boxes. The protein is Transcriptional repressor NrdR of Streptococcus mutans serotype c (strain ATCC 700610 / UA159).